The primary structure comprises 470 residues: Argininosuccinate lyase (470 aa).

The protein belongs to the lyase 1 family. Argininosuccinate lyase subfamily.

Its subcellular location is the cytoplasm. The catalysed reaction is 2-(N(omega)-L-arginino)succinate = fumarate + L-arginine. It participates in amino-acid biosynthesis; L-arginine biosynthesis; L-arginine from L-ornithine and carbamoyl phosphate: step 3/3. This chain is Argininosuccinate lyase, found in Mycobacterium tuberculosis (strain ATCC 25618 / H37Rv).